The following is a 461-amino-acid chain: Glyceraldehyde-3-phosphate dehydrogenase-like protein (461 aa).

Position 421 is a phosphothreonine (threonine 421).

It belongs to the glyceraldehyde-3-phosphate dehydrogenase family.

This Pseudomonas aeruginosa (strain UCBPP-PA14) protein is Glyceraldehyde-3-phosphate dehydrogenase-like protein (gap2).